Consider the following 401-residue polypeptide: Nodulation protein E (401 aa).

A Ketosynthase family 3 (KS3) domain is found at 2-400 (DRRVVITGMG…GTNAVLAFKQ (399 aa)). Residues Cys161, His293, and His330 each act as for beta-ketoacyl synthase activity in the active site. A helical membrane pass occupies residues 328-347 (HAHCIGAASALEMIACVMAI).

It belongs to the thiolase-like superfamily. Beta-ketoacyl-ACP synthases family.

It localises to the cell inner membrane. Proposed to synthesize NOD factor fatty acyl chain. Involved in the synthesis of a highly unsaturated fatty acid moiety, which forms part of a lipo-oligosaccharide that is responsible for host specificity. The protein is Nodulation protein E (nodE) of Rhizobium meliloti (Ensifer meliloti).